The chain runs to 299 residues: Glycerol-3-phosphate dehydrogenase [NAD(P)+] (299 aa).

Positions 11, 30, 31, and 79 each coordinate NADPH. Residues Lys-79, Gly-107, and Ser-109 each coordinate sn-glycerol 3-phosphate. Ala-111 lines the NADPH pocket. Residues Lys-161, Asp-214, Ser-224, Arg-225, and Asn-226 each contribute to the sn-glycerol 3-phosphate site. Lys-161 acts as the Proton acceptor in catalysis. Arg-225 provides a ligand contact to NADPH. Residues Val-249 and Glu-251 each contribute to the NADPH site.

This sequence belongs to the NAD-dependent glycerol-3-phosphate dehydrogenase family.

It is found in the cytoplasm. It carries out the reaction sn-glycerol 3-phosphate + NAD(+) = dihydroxyacetone phosphate + NADH + H(+). It catalyses the reaction sn-glycerol 3-phosphate + NADP(+) = dihydroxyacetone phosphate + NADPH + H(+). Its pathway is membrane lipid metabolism; glycerophospholipid metabolism. Its function is as follows. Catalyzes the reduction of the glycolytic intermediate dihydroxyacetone phosphate (DHAP) to sn-glycerol 3-phosphate (G3P), the key precursor for phospholipid synthesis. This Nitratiruptor sp. (strain SB155-2) protein is Glycerol-3-phosphate dehydrogenase [NAD(P)+].